The sequence spans 230 residues: MEQRITVAIDGPAAAGKSTVAKMIANQLGFIYVDTGAMYRALTYQALQEGIDPKNEDSVLTILMNSNIELRQAENGQRVFVNNKDVSEEIRYPDVTSKVSFVAEHPSIRKEMVSRQQKLANNRSVVMDGRDIGTHVLPDAEVKIFLIASVEERAKRRHEENIKKGIPSDIKLLKKEISDRDEIDSNREVSPLIKAEDAIEVDTTSLSIAEVKDQILNEIFKYNTQNNKGV.

Residue 11–19 (GPAAAGKST) participates in ATP binding.

It belongs to the cytidylate kinase family. Type 1 subfamily.

The protein localises to the cytoplasm. It catalyses the reaction CMP + ATP = CDP + ADP. It carries out the reaction dCMP + ATP = dCDP + ADP. In Oceanobacillus iheyensis (strain DSM 14371 / CIP 107618 / JCM 11309 / KCTC 3954 / HTE831), this protein is Cytidylate kinase.